Consider the following 260-residue polypeptide: Indole-3-glycerol phosphate synthase (260 aa).

This sequence belongs to the TrpC family.

It catalyses the reaction 1-(2-carboxyphenylamino)-1-deoxy-D-ribulose 5-phosphate + H(+) = (1S,2R)-1-C-(indol-3-yl)glycerol 3-phosphate + CO2 + H2O. It participates in amino-acid biosynthesis; L-tryptophan biosynthesis; L-tryptophan from chorismate: step 4/5. This Staphylococcus aureus (strain bovine RF122 / ET3-1) protein is Indole-3-glycerol phosphate synthase.